A 471-amino-acid polypeptide reads, in one-letter code: Probable ribonuclease FAU-1 (471 aa).

The protein belongs to the FAU-1 family.

Its function is as follows. Probable RNase involved in rRNA stability through maturation and/or degradation of precursor rRNAs. Preferentially cleaves UA sequences in the 5' precursor region of 5S rRNA. Binds to RNA in loop regions with AU-rich sequences. The polypeptide is Probable ribonuclease FAU-1 (Thermococcus kodakarensis (strain ATCC BAA-918 / JCM 12380 / KOD1) (Pyrococcus kodakaraensis (strain KOD1))).